Here is a 692-residue protein sequence, read N- to C-terminus: Elongation factor G (692 aa).

One can recognise a tr-type G domain in the interval 8 to 283; sequence EKVRNIGIAA…AVVDYLPAPT (276 aa). Residues 17–24, 81–85, and 135–138 contribute to the GTP site; these read AHIDAGKT, DTPGH, and NKMD.

The protein belongs to the TRAFAC class translation factor GTPase superfamily. Classic translation factor GTPase family. EF-G/EF-2 subfamily.

It is found in the cytoplasm. Catalyzes the GTP-dependent ribosomal translocation step during translation elongation. During this step, the ribosome changes from the pre-translocational (PRE) to the post-translocational (POST) state as the newly formed A-site-bound peptidyl-tRNA and P-site-bound deacylated tRNA move to the P and E sites, respectively. Catalyzes the coordinated movement of the two tRNA molecules, the mRNA and conformational changes in the ribosome. The protein is Elongation factor G of Nitratiruptor sp. (strain SB155-2).